The primary structure comprises 398 residues: Acetate kinase (398 aa).

Residue Asn-10 coordinates Mg(2+). An ATP-binding site is contributed by Lys-17. Arg-89 contributes to the substrate binding site. Asp-148 serves as the catalytic Proton donor/acceptor. Residues 208-212, 283-285, and 331-335 contribute to the ATP site; these read HLGNG, DCR, and GIGEN. Glu-385 is a binding site for Mg(2+).

The protein belongs to the acetokinase family. As to quaternary structure, homodimer. It depends on Mg(2+) as a cofactor. Requires Mn(2+) as cofactor.

It localises to the cytoplasm. It catalyses the reaction acetate + ATP = acetyl phosphate + ADP. It participates in metabolic intermediate biosynthesis; acetyl-CoA biosynthesis; acetyl-CoA from acetate: step 1/2. Catalyzes the formation of acetyl phosphate from acetate and ATP. Can also catalyze the reverse reaction. The sequence is that of Acetate kinase from Histophilus somni (strain 2336) (Haemophilus somnus).